Consider the following 88-residue polypeptide: Small ribosomal subunit protein bS20 (88 aa).

Residues 1 to 25 (MANTAQALKRIRQTNKARAQNASQR) form a disordered region. A compositionally biased stretch (polar residues) spans 16–25 (KARAQNASQR).

It belongs to the bacterial ribosomal protein bS20 family.

Functionally, binds directly to 16S ribosomal RNA. This Dichelobacter nodosus (strain VCS1703A) protein is Small ribosomal subunit protein bS20.